The primary structure comprises 299 residues: MTLINRSKPFVLLVGFSIISSLLLWVSQASVVSSGDFNKDFFVTWSPTHVNTSNDGRSRTLKLDQESGASFSSIQTFLFGQIDMKIKLIRGSSQGTVVAYYMSSDQPNRDEIDFEFLGNVNGQPYILQTNVYAEGLDNREERIHLWFDPAKDFHTYSILWNIHQIVFMVDQIPIRLYRNHGEKGVAYPRLQPMSVQASLWNGESWATRGGHDKIDWSKGPFVASFGDYKIDACIWIGNTSFCNGESTENWWNKNEFSSLTRVQKRWFKWVRKYHLIYDYCQDYGRFNNKLPKECSLPKY.

The N-terminal stretch at 1 to 29 (MTLINRSKPFVLLVGFSIISSLLLWVSQA) is a signal peptide. The 196-residue stretch at 30–225 (SVVSSGDFNK…WSKGPFVASF (196 aa)) folds into the GH16 domain. N-linked (GlcNAc...) asparagine glycosylation is present at asparagine 51. Glutamate 111 serves as the catalytic Nucleophile. The active-site Proton donor is glutamate 115. Xyloglucan contacts are provided by residues glutamate 115, 128-130 (QTN), 138-140 (NRE), 204-205 (SW), and glycine 209. Cystine bridges form between cysteine 233–cysteine 242 and cysteine 280–cysteine 294. An N-linked (GlcNAc...) asparagine glycan is attached at asparagine 238. Xyloglucan is bound at residue arginine 285.

The protein belongs to the glycosyl hydrolase 16 family. XTH group 1 subfamily. Contains at least one intrachain disulfide bond essential for its enzymatic activity.

It localises to the secreted. The protein resides in the cell wall. Its subcellular location is the extracellular space. It is found in the apoplast. It carries out the reaction breaks a beta-(1-&gt;4) bond in the backbone of a xyloglucan and transfers the xyloglucanyl segment on to O-4 of the non-reducing terminal glucose residue of an acceptor, which can be a xyloglucan or an oligosaccharide of xyloglucan.. Its function is as follows. Catalyzes xyloglucan endohydrolysis (XEH) and/or endotransglycosylation (XET). Cleaves and religates xyloglucan polymers, an essential constituent of the primary cell wall, and thereby participates in cell wall construction of growing tissues. This chain is Probable xyloglucan endotransglucosylase/hydrolase protein 10 (XTH10), found in Arabidopsis thaliana (Mouse-ear cress).